Here is a 298-residue protein sequence, read N- to C-terminus: Probable alpha-L-glutamate ligase (298 aa).

Positions 108-290 (LQLLLKTGVP…IAAEIIDYIE (183 aa)) constitute an ATP-grasp domain. ATP contacts are provided by residues Lys-144, 181–182 (DF), Asp-190, and 214–216 (RAN). Mg(2+) is bound by residues Asp-251, Glu-263, and Asn-265. Residues Asp-251, Glu-263, and Asn-265 each coordinate Mn(2+).

It belongs to the RimK family. The cofactor is Mg(2+). Mn(2+) is required as a cofactor.

The polypeptide is Probable alpha-L-glutamate ligase (Haemophilus influenzae (strain PittEE)).